The following is a 400-amino-acid chain: Serpin E3 (400 aa).

An N-terminal signal peptide occupies residues 1 to 19 (MQSLLLALLLLPVCSPGGA). A glycan (N-linked (GlcNAc...) asparagine) is linked at asparagine 46.

The protein belongs to the serpin family.

The protein localises to the secreted. Functionally, probable serine protease inhibitor. The sequence is that of Serpin E3 (SERPINE3) from Bos taurus (Bovine).